The following is a 619-amino-acid chain: Sorting nexin-41 (619 aa).

The disordered stretch occupies residues Met1 to Gly95. The region spanning Pro108–Trp224 is the PX domain. A 1,2-diacyl-sn-glycero-3-phospho-(1D-myo-inositol-3-phosphate) contacts are provided by Arg142, Ser144, Lys168, and Arg191. Residues Tyr444 to Ser510 are disordered. Over residues Pro454 to Ser467 the composition is skewed to basic and acidic residues.

The protein belongs to the sorting nexin family.

The protein localises to the endosome membrane. It localises to the endomembrane system. May be required for cytoplasm to vacuole transport (Cvt) and pexophagy. The polypeptide is Sorting nexin-41 (vsp-6) (Neurospora crassa (strain ATCC 24698 / 74-OR23-1A / CBS 708.71 / DSM 1257 / FGSC 987)).